A 481-amino-acid chain; its full sequence is Matrilin-3 (481 aa).

An N-terminal signal peptide occupies residues 1–27 (MLLSAPLRHLPGLLLLLWPLLLLPSLA). The region spanning 78-253 (DLVFIIDSSR…GVIEKLSARF (176 aa)) is the VWFA domain. Arg193 carries the post-translational modification Omega-N-methylarginine. EGF-like domains are found at residues 259-300 (ALDQ…KTCS), 301-342 (AIDK…RTCA), 343-384 (ALDK…KTCS), and 385-426 (VRNK…KTCS). Cystine bridges form between Cys263–Cys274, Cys270–Cys284, Cys286–Cys299, Cys305–Cys316, Cys312–Cys326, Cys328–Cys341, Cys347–Cys358, Cys354–Cys368, Cys370–Cys383, Cys389–Cys400, Cys396–Cys410, and Cys412–Cys425. N-linked (GlcNAc...) asparagine glycosylation is present at Asn321. A Phosphoserine; by FAM20C modification is found at Ser436. Residues 451-475 (EKVSSHLQKLNTKLDNILKKLKVTE) are a coiled coil.

As to quaternary structure, can form homooligomers (monomers, dimers, trimers and tetramers) and heterooligomers with matrilin-1. Interacts with COMP. Component of a complex containing at least CRELD2, MANF, MATN3 and PDIA4. Strongly expressed in growing skeletal tissue such as epiphyseal growth plate or in bone undergoing growth and remodeling. In the bone, actively synthesized in osteoblasts and osteocytes. Expressed in cartilage of sternum, femur, vertebrae, trachea, articular and epiphyseal cartilage, cartilage of developing bones and bones.

It localises to the secreted. Its function is as follows. Major component of the extracellular matrix of cartilage and may play a role in the formation of extracellular filamentous networks. The chain is Matrilin-3 (Matn3) from Mus musculus (Mouse).